A 485-amino-acid polypeptide reads, in one-letter code: Glutamyl-tRNA(Gln) amidotransferase subunit A (485 aa).

Residues Lys79 and Ser154 each act as charge relay system in the active site. The active-site Acyl-ester intermediate is the Ser178.

Belongs to the amidase family. GatA subfamily. Heterotrimer of A, B and C subunits.

The catalysed reaction is L-glutamyl-tRNA(Gln) + L-glutamine + ATP + H2O = L-glutaminyl-tRNA(Gln) + L-glutamate + ADP + phosphate + H(+). Functionally, allows the formation of correctly charged Gln-tRNA(Gln) through the transamidation of misacylated Glu-tRNA(Gln) in organisms which lack glutaminyl-tRNA synthetase. The reaction takes place in the presence of glutamine and ATP through an activated gamma-phospho-Glu-tRNA(Gln). This is Glutamyl-tRNA(Gln) amidotransferase subunit A from Staphylococcus epidermidis (strain ATCC 12228 / FDA PCI 1200).